A 307-amino-acid chain; its full sequence is Leucine-rich repeat-containing protein 59 (307 aa).

The residue at position 1 (M1) is an N-acetylmethionine. At T2 the chain carries N-acetylthreonine; in Leucine-rich repeat-containing protein 59, N-terminally processed. Residues 2–244 are Cytoplasmic-facing; it reads TKTGSKGGNL…KPPPRKHNRS (243 aa). LRR repeat units lie at residues 10–31, 40–62, 63–84, 86–107, and 109–128; these read NLRDKLDGNELDLSLSDLNEVP, KATVLDLSCNKLSTLPSDFCGLT, HLVKLDLSKNKLQQLPADFGRL, NLQHLDLLNNRLVTLPVSFAQL, and NLKWLDLKDNPLDPVLAKVA. Phosphoserine is present on residues S23 and S25. Position 73 is an N6-succinyllysine (K73). An N6-acetyllysine modification is found at K135. The stretch at 148-216 forms a coiled coil; it reads MKAVQADQER…KASKREQEKK (69 aa). The tract at residues 150–242 is disordered; sequence AVQADQERER…PRKPPPRKHN (93 aa). The segment covering 154-221 has biased composition (basic and acidic residues); sequence DQERERQRRL…EQEKKPKKET (68 aa). The segment covering 229-242 has biased composition (basic residues); that stretch reads SGSRPRKPPPRKHN. Residues 245–265 form a helical membrane-spanning segment; it reads WAVLKGLLLLLLLCVAGGLVV. Over 266-307 the chain is Lumenal; that stretch reads CRVTGLQQQPLCTSVNAIYDNAVQGLRHHEILQWVLQTDSQQ.

Can form homodimers. Interacts with SGO1. Interacts with FGF1.

It localises to the microsome membrane. The protein resides in the endoplasmic reticulum membrane. Its subcellular location is the nucleus envelope. Its function is as follows. Required for nuclear import of FGF1, but not that of FGF2. Might regulate nuclear import of exogenous FGF1 by facilitating interaction with the nuclear import machinery and by transporting cytosolic FGF1 to, and possibly through, the nuclear pores. This is Leucine-rich repeat-containing protein 59 (Lrrc59) from Rattus norvegicus (Rat).